The primary structure comprises 233 residues: MTSLPSSIFQGGLGDQPQSGLVPKVVEQTTRGERAYDIFSRLLKERIVFIGTPINDQIANLTVAQLLYLESEGSSQPINIYINSPGGVIYSGLGVYDTMQYVEAPISTTCVGLAASMGSVLLAGGEDGQRACLPNSRVMMHQPMGGTEGQASDIEIQAKEMAWLKKRLYQILSFHTGKDIDQIEEDADRNHWLSAEEAQEYGLVDQVMNEGNLDALKSIHANGEASDADSDEE.

The Nucleophile role is filled by serine 116. The active site involves histidine 141.

The protein belongs to the peptidase S14 family. In terms of assembly, fourteen ClpP subunits assemble into 2 heptameric rings which stack back to back to give a disk-like structure with a central cavity, resembling the structure of eukaryotic proteasomes.

The protein resides in the cytoplasm. The catalysed reaction is Hydrolysis of proteins to small peptides in the presence of ATP and magnesium. alpha-casein is the usual test substrate. In the absence of ATP, only oligopeptides shorter than five residues are hydrolyzed (such as succinyl-Leu-Tyr-|-NHMec, and Leu-Tyr-Leu-|-Tyr-Trp, in which cleavage of the -Tyr-|-Leu- and -Tyr-|-Trp bonds also occurs).. In terms of biological role, cleaves peptides in various proteins in a process that requires ATP hydrolysis. Has a chymotrypsin-like activity. Plays a major role in the degradation of misfolded proteins. The sequence is that of ATP-dependent Clp protease proteolytic subunit 1 from Salinibacter ruber (strain DSM 13855 / M31).